A 201-amino-acid polypeptide reads, in one-letter code: IMP cyclohydrolase (201 aa).

This sequence belongs to the archaeal IMP cyclohydrolase family.

The enzyme catalyses IMP + H2O = 5-formamido-1-(5-phospho-D-ribosyl)imidazole-4-carboxamide. Its pathway is purine metabolism; IMP biosynthesis via de novo pathway; IMP from 5-formamido-1-(5-phospho-D-ribosyl)imidazole-4-carboxamide: step 1/1. Functionally, catalyzes the cyclization of 5-formylamidoimidazole-4-carboxamide ribonucleotide to IMP. This Methanococcus maripaludis (strain C7 / ATCC BAA-1331) protein is IMP cyclohydrolase.